Consider the following 267-residue polypeptide: Hemin import ATP-binding protein HmuV (267 aa).

The region spanning 3-243 (LEVRGIEVWR…ELVARVFGLR (241 aa)) is the ABC transporter domain. An ATP-binding site is contributed by 35-42 (GPNGAGKS).

The protein belongs to the ABC transporter superfamily. Heme (hemin) importer (TC 3.A.1.14.5) family. As to quaternary structure, the complex is composed of two ATP-binding proteins (HmuV), two transmembrane proteins (HmuU) and a solute-binding protein (HmuT).

It is found in the cell inner membrane. In terms of biological role, part of the ABC transporter complex HmuTUV involved in hemin import. Responsible for energy coupling to the transport system. The chain is Hemin import ATP-binding protein HmuV from Myxococcus xanthus (strain DK1622).